Consider the following 184-residue polypeptide: Large ribosomal subunit protein uL6 (184 aa).

It belongs to the universal ribosomal protein uL6 family. Part of the 50S ribosomal subunit.

Its function is as follows. This protein binds to the 23S rRNA, and is important in its secondary structure. It is located near the subunit interface in the base of the L7/L12 stalk, and near the tRNA binding site of the peptidyltransferase center. In Thermosipho melanesiensis (strain DSM 12029 / CIP 104789 / BI429), this protein is Large ribosomal subunit protein uL6.